A 241-amino-acid chain; its full sequence is Urease accessory protein UreF (241 aa).

The protein belongs to the UreF family. As to quaternary structure, ureD, UreF and UreG form a complex that acts as a GTP-hydrolysis-dependent molecular chaperone, activating the urease apoprotein by helping to assemble the nickel containing metallocenter of UreC. The UreE protein probably delivers the nickel.

Its subcellular location is the cytoplasm. Its function is as follows. Required for maturation of urease via the functional incorporation of the urease nickel metallocenter. The sequence is that of Urease accessory protein UreF from Rhodopseudomonas palustris (strain BisB18).